Reading from the N-terminus, the 330-residue chain is Aspartate--ammonia ligase (330 aa).

Belongs to the class-II aminoacyl-tRNA synthetase family. AsnA subfamily.

The protein resides in the cytoplasm. The catalysed reaction is L-aspartate + NH4(+) + ATP = L-asparagine + AMP + diphosphate + H(+). The protein operates within amino-acid biosynthesis; L-asparagine biosynthesis; L-asparagine from L-aspartate (ammonia route): step 1/1. The polypeptide is Aspartate--ammonia ligase (Edwardsiella ictaluri (strain 93-146)).